A 495-amino-acid polypeptide reads, in one-letter code: Meiosis-specific nuclear structural protein 1 (495 aa).

Residues 1-314 (MGSKRRNLSC…KLEEMLRQRE (314 aa)) are interaction with BBOF1. A coiled-coil region spans residues 28-410 (VQALKNVNSQ…QLEHRRAVEK (383 aa)). Phosphotyrosine is present on Y188.

Belongs to the MNS1 family. As to quaternary structure, able to form oligomers. Microtubule inner protein component of sperm flagellar doublet microtubules. Interacts with ODAD1. Interacts with BBOF1. Expressed in nasal respiratory epithelium and in the sperm.

Its subcellular location is the nucleus. The protein resides in the cytoplasm. It is found in the cytoskeleton. It localises to the cilium axoneme. The protein localises to the flagellum axoneme. Microtubule inner protein (MIP) part of the dynein-decorated doublet microtubules (DMTs) in cilia axoneme, which is required for motile cilia beating. May play a role in the control of meiotic division and germ cell differentiation through regulation of pairing and recombination during meiosis. Required for sperm flagella assembly. May play a role in the assembly and function of the outer dynein arm-docking complex (ODA-DC). ODA-DC mediates outer dynein arms (ODA) binding onto the axonemal doublet microtubules. The chain is Meiosis-specific nuclear structural protein 1 from Homo sapiens (Human).